An 818-amino-acid chain; its full sequence is MEIELIRKNLDGIRIERRGGLQKRFRIVEPDLQPNETKDKIGNVGKVVRLQSNFTKFSVNKSEKYIMYDTTFSKMGLSPKLKLQILVRICKEYNLPGSFCYDGRRLFTSDNWTEGSDIKEFTIDEKKVSLRLVSTFLSDTEEYYQMINVLLNNLQIIMGQEKIGKGYFLGSNSNKDNVVKNIGPTFFETNNFKVLGGFGTTLQRGTRPNGQLTTLLYIERINRVLNDNSVLVTYNRKNIDQLIGRDILTKYNNKTYRISEIKEMNINETFEMVGRTLSYAQYFKERYNINLTTEQQPFVLTRVKKIARRDKRKEHNENEAPEDMDLTLNITGELCFLCGFSDQEKSNIDLQKNLGCVLKRGPRERLDDIPSFCDWIKTNNNSQGMSNKWGLKIDNTPLEIEGRELPHCDVISGGQRINEKIKDDWKFGKVQFNVQKGVKHEIDVVIVDRNDSQYGNFLNDVEYEIKQLRFDAKIGRVLVCSANDVERSLNDVMRSGSGCAKIALVFVPDDRVYAKVKSFTISTGLLTQCVTTRNGTNRNDKRRQVVSSKTVMQIFSKFGYDPWTIDIKMRPTMIVGMDTFHNKGSKKSIHASVFSINSTFSQYMSFANSPKGKQEFHDTLSGNFKAALTEFKRIYKILPVRIMVYRDGVGDSQLQFTKQFEVDAMKPLVENIYKENGCQVPQIIYVIVKKRIGTKLFNRGDNANPGTIVDKEIVKPNFFEFFLVSQRVTRGTASPTNYNVLEDTRYQNKAGIIEAITPNELQRITYTLTHLYFNWMGTIRVPVPVHYAHKLAELIGKVHKGSTPALINERIRNRLFYL.

In terms of domain architecture, PAZ spans 220 to 339 (RINRVLNDNS…ITGELCFLCG (120 aa)). A Piwi domain is found at 501–800 (KIALVFVPDD…LAELIGKVHK (300 aa)).

It belongs to the argonaute family. Piwi subfamily.

The sequence is that of Piwi-like protein (iwi) from Dugesia japonica (Planarian).